The chain runs to 5571 residues: Polyketide synthase GfsB (5571 aa).

The segment at 1 to 27 is disordered; that stretch reads MSVPPPGATPSRTSRTKGLKDRPRMEN. Residues 18 to 27 are compositionally biased toward basic and acidic residues; that stretch reads GLKDRPRMEN. The Ketosynthase family 3 (KS3) 1 domain maps to 57 to 483; that stretch reads QEPVAIIGMS…GTNAHVIIEQ (427 aa). Module regions lie at residues 57–2148, 2167–3728, and 3746–5485; these read QEPV…RDTL, DEPL…GSQV, and DEPV…HTHL. Catalysis depends on for beta-ketoacyl synthase 1 activity residues Cys230, His365, and His405. The segment at 485–518 is disordered; sequence PAIEGTGLGDDAPPTAEHPEERTPADGGPAPQPV. In terms of domain architecture, Malonyl-CoA:ACP transacylase (MAT) 1 spans 611-926; it reads FVFPGQGSQW…LRSLAEAYAH (316 aa). The tract at residues 976-1109 is N-terminal hotdog fold 1; that stretch reads HPLLAAATSL…GYLAVGAHEP (134 aa). Positions 976–1264 constitute a PKS/mFAS DH 1 domain; sequence HPLLAAATSL…LRPLATNQAP (289 aa). Residue His1008 is the Proton acceptor; for dehydratase activity 1 of the active site. Residues 1122 to 1264 are C-terminal hotdog fold 1; sequence ATPLDVTDLY…LRPLATNQAP (143 aa). The active-site Proton donor; for dehydratase activity 1 is the Asp1183. The Enoyl reductase (ER) domain occupies 1478-1777; the sequence is GTLDHLTLIP…QARHIGKIVL (300 aa). Positions 1787–1966 constitute a Ketoreductase (KR) 1 domain; sequence GTVLVTGATG…TSLAWGLWEE (180 aa). The region spanning 2073–2148 is the Carrier 1 domain; it reads RIVNDLVRDH…ELAAHLRDTL (76 aa). Ser2108 is subject to O-(pantetheine 4'-phosphoryl)serine. The 427-residue stretch at 2167–2593 folds into the Ketosynthase family 3 (KS3) 2 domain; that stretch reads DEPLAVVAMS…GTNAHVILEQ (427 aa). Catalysis depends on for beta-ketoacyl synthase 2 activity residues Cys2340, His2475, and His2515. Residues 2710–3016 enclose the Malonyl-CoA:ACP transacylase (MAT) 2 domain; it reads VFSGQGSQRP…AAVALQRGNR (307 aa). Residues 3373–3551 form the Ketoreductase (KR) 2 domain; the sequence is GTVLVTGGTG…VSVAWGPWAE (179 aa). Positions 3653–3728 constitute a Carrier 2 domain; the sequence is TALLDLVRGQ…ALAEYVGSQV (76 aa). The residue at position 3688 (Ser3688) is an O-(pantetheine 4'-phosphoryl)serine. The Ketosynthase family 3 (KS3) 3 domain maps to 3746–4172; that stretch reads DEPVAIIGMS…GTNAHVILEQ (427 aa). Active-site for beta-ketoacyl synthase 3 activity residues include Cys3919, His4054, and His4094. Positions 4279-4601 constitute a Malonyl-CoA:ACP transacylase (MAT) 3 domain; sequence FLFSGQGSQR…ATAHVNGVQP (323 aa). The N-terminal hotdog fold 2 stretch occupies residues 4649–4774; it reads HPLLAGVVDL…GALTVAEAVD (126 aa). The PKS/mFAS DH 2 domain maps to 4649–4931; that stretch reads HPLLAGVVDL…TRPIAAGQLA (283 aa). Catalysis depends on His4681, which acts as the Proton acceptor; for dehydratase activity 2. Residues 4787–4931 form a C-terminal hotdog fold 2 region; the sequence is AIEVELDDPY…TRPIAAGQLA (145 aa). The active-site Proton donor; for dehydratase activity 2 is the Asp4848. Positions 5134-5306 constitute a Ketoreductase (KR) 3 domain; that stretch reads LLVTGASGVL…TSLSWGLWAE (173 aa). Residues 5410-5485 enclose the Carrier 3 domain; that stretch reads RMVLDLVRDR…ALARYLHTHL (76 aa). Ser5445 carries the O-(pantetheine 4'-phosphoryl)serine modification.

Pantetheine 4'-phosphate serves as cofactor.

The protein operates within antibiotic biosynthesis. Second protein in the synthesis of the 16-membered macrolide antibiotics FD-891 and FD-892. Composed of 3 modules. Modifies the product of GfsA by multiple rounds of addition of malonyl-CoA or methylmalonyl-CoA and other modifications to help generate the final products. This chain is Polyketide synthase GfsB, found in Streptomyces halstedii.